Reading from the N-terminus, the 237-residue chain is Ribonuclease 3 (237 aa).

The region spanning 5-136 (VDELSARLGV…VIAALFLDQG (132 aa)) is the RNase III domain. A Mg(2+)-binding site is contributed by E49. D53 is an active-site residue. Residues D122 and E125 each coordinate Mg(2+). E125 is an active-site residue. Positions 163–232 (DYKSRLQARI…ARAALDALEG (70 aa)) constitute a DRBM domain. Positions 185 to 208 (IDRSGPEHRPEFTVEVRAGEERLG) are enriched in basic and acidic residues. Residues 185-237 (IDRSGPEHRPEFTVEVRAGEERLGTGKGPSKQAAEQAAARAALDALEGGTDGR) are disordered. Residues 216–231 (QAAEQAAARAALDALE) are compositionally biased toward low complexity.

Belongs to the ribonuclease III family. Homodimer. Mg(2+) serves as cofactor.

The protein resides in the cytoplasm. The enzyme catalyses Endonucleolytic cleavage to 5'-phosphomonoester.. Its function is as follows. Digests double-stranded RNA. Involved in the processing of primary rRNA transcript to yield the immediate precursors to the large and small rRNAs (23S and 16S). Processes some mRNAs, and tRNAs when they are encoded in the rRNA operon. Processes pre-crRNA and tracrRNA of type II CRISPR loci if present in the organism. This is Ribonuclease 3 from Roseiflexus sp. (strain RS-1).